Here is a 157-residue protein sequence, read N- to C-terminus: Neutrophil recruitment protein (157 aa).

A signal peptide spans 1 to 19 (MCSIWLTFFLSFLILNTKA).

The protein belongs to the PBP/GOBP family. In terms of assembly, interacts with mouse TLR1; the interaction promotes activation of canonical NF-kappa-B signaling in host macrophages. Interacts with human TLR1. Interacts with mouse TLR4; the interaction promotes activation of canonical NF-kappa-B signaling in host macrophages. Interacts with human TLR4. As to expression, female salivary gland (at protein level).

It localises to the secreted. Activates MyD88-dependent canonical NF-kappa-B signaling in host macrophages via interaction with host TLR1 and TLR4; this drives the expression of neutrophil chemoattractants, followed by the subsequent influx of neutrophils and recruitment of myeloid cells at the bite site. Functionally, (Microbial infection) Promotes Zika virus infection in mouse model by facilitating recruitment of flavivirus-permissive myeloid cells at the bite site. In terms of biological role, (Microbial infection) Promotes dengue virus infection in mouse model by facilitating recruitment of flavivirus-permissive myeloid cells at the bite site. The polypeptide is Neutrophil recruitment protein (Aedes aegypti (Yellowfever mosquito)).